A 163-amino-acid polypeptide reads, in one-letter code: Nucleotide-binding protein Cla_1551 (163 aa).

The protein belongs to the YajQ family.

Functionally, nucleotide-binding protein. This Campylobacter lari (strain RM2100 / D67 / ATCC BAA-1060) protein is Nucleotide-binding protein Cla_1551.